The primary structure comprises 155 residues: Sec-independent protein translocase protein TatB (155 aa).

The chain crosses the membrane as a helical span at residues 1-21 (MIDLGISKIALIGAVALIVIG). 2 disordered regions span residues 81–103 (ASDF…LPGF) and 131–155 (SGIR…SRKA). The span at 89-98 (SETTGSTSSD) shows a compositional bias: polar residues.

Belongs to the TatB family. As to quaternary structure, the Tat system comprises two distinct complexes: a TatABC complex, containing multiple copies of TatA, TatB and TatC subunits, and a separate TatA complex, containing only TatA subunits. Substrates initially bind to the TatABC complex, which probably triggers association of the separate TatA complex to form the active translocon.

It is found in the cell inner membrane. Functionally, part of the twin-arginine translocation (Tat) system that transports large folded proteins containing a characteristic twin-arginine motif in their signal peptide across membranes. Together with TatC, TatB is part of a receptor directly interacting with Tat signal peptides. TatB may form an oligomeric binding site that transiently accommodates folded Tat precursor proteins before their translocation. The sequence is that of Sec-independent protein translocase protein TatB from Polaromonas naphthalenivorans (strain CJ2).